A 562-amino-acid chain; its full sequence is Probable malate:quinone oxidoreductase (562 aa).

Belongs to the MQO family. FAD serves as cofactor.

It catalyses the reaction (S)-malate + a quinone = a quinol + oxaloacetate. It functions in the pathway carbohydrate metabolism; tricarboxylic acid cycle; oxaloacetate from (S)-malate (quinone route): step 1/1. The polypeptide is Probable malate:quinone oxidoreductase (Stenotrophomonas maltophilia (strain K279a)).